A 466-amino-acid chain; its full sequence is SVGFKAGVKDYKLTYYTPEYETKDTDILAAFRVTPQPGVPPEEAGAAVAAESSTGTWTTVWTDGLTSLDRYKGRCYGIEPVPGEENQYIAYVAYPLDLFEEGSVTNMFTSIVGNVFGFKALRALRLEDLRIPTAYIKTFQGPPHGIQVERDKLNKYGRPLLGCTIKPKLGLSAKNYGRAVYECLRGGLDFTKDDENVNSQPFMRWRDRFLFCAEAIYKSQAETGEIKGHYLNATAGTCEEMMKRAIFARELGAPIVMHDYLTGGFTANTSLAHYCRDNGLLLHIHRAMHAVIDRQKNHGMHFRVLAKALRLSGGDHIHAGTVVGKLEGERDITLGFVDLLRDDFVEKDRSRGIYFTQDWVSLPGVLPVASGGIHVWHMPALTEIFGDDSVLQFGGGTLGHPWGNAPGAVANRVALEACVQARNEGRDLAREGNEIIREASKWSPELAAACEVWKAIKFEFEAVDTL.

The residue at position 5 (lysine 5) is an N6,N6,N6-trimethyllysine. Positions 114 and 164 each coordinate substrate. Catalysis depends on lysine 166, which acts as the Proton acceptor. Lysine 168 provides a ligand contact to substrate. Residues lysine 192, aspartate 194, and glutamate 195 each coordinate Mg(2+). Position 192 is an N6-carboxylysine (lysine 192). The Proton acceptor role is filled by histidine 285. The substrate site is built by arginine 286, histidine 318, and serine 370.

Belongs to the RuBisCO large chain family. Type I subfamily. As to quaternary structure, heterohexadecamer of 8 large chains and 8 small chains; disulfide-linked. The disulfide link is formed within the large subunit homodimers. Mg(2+) is required as a cofactor. The disulfide bond which can form in the large chain dimeric partners within the hexadecamer appears to be associated with oxidative stress and protein turnover.

It is found in the plastid. The protein localises to the chloroplast. It carries out the reaction 2 (2R)-3-phosphoglycerate + 2 H(+) = D-ribulose 1,5-bisphosphate + CO2 + H2O. The catalysed reaction is D-ribulose 1,5-bisphosphate + O2 = 2-phosphoglycolate + (2R)-3-phosphoglycerate + 2 H(+). In terms of biological role, ruBisCO catalyzes two reactions: the carboxylation of D-ribulose 1,5-bisphosphate, the primary event in carbon dioxide fixation, as well as the oxidative fragmentation of the pentose substrate in the photorespiration process. Both reactions occur simultaneously and in competition at the same active site. In Cucurbita pepo (Vegetable marrow), this protein is Ribulose bisphosphate carboxylase large chain.